A 767-amino-acid chain; its full sequence is Transferrin receptor protein 1 (767 aa).

Topologically, residues 1-67 (MDQARSAFSN…LTKPKRFNGS (67 aa)) are cytoplasmic. Phosphoserine occurs at positions 9 and 18. Position 19 is a phosphotyrosine (Tyr-19). The Endocytosis signal motif lies at 19-22 (YTRF). Thr-20 is subject to Phosphothreonine. Ser-23 carries the post-translational modification Phosphoserine. The Stop-transfer sequence motif lies at 60–63 (KPKR). The helical; Signal-anchor for type II membrane protein transmembrane segment at 68 to 88 (FCYAVIAVIIFFLIGFMIGYL) threads the bilayer. Cys-69 carries S-palmitoyl cysteine lipidation. The Extracellular segment spans residues 89–767 (GYCKRVEPKS…GDIWDIDNEF (679 aa)). Residues 96–110 (PKSECGRSGDSKEIE) are compositionally biased toward basic and acidic residues. The disordered stretch occupies residues 96 to 122 (PKSECGRSGDSKEIEGTEPPETEEYFP). Acidic residues predominate over residues 111 to 121 (GTEPPETEEYF). Asn-211, Asn-258, and Asn-324 each carry an N-linked (GlcNAc...) asparagine glycan. The PA domain maps to 230-320 (SKATTVTGKL…GTGDPYTPGF (91 aa)). Residues 576–767 (TMDTYEVLSQ…GDIWDIDNEF (192 aa)) are ligand-binding. Positions 653–655 (RGD) match the Cell attachment site motif. Asn-734 carries an N-linked (GlcNAc...) asparagine glycan.

This sequence belongs to the peptidase M28 family. M28B subfamily. Homodimer; disulfide-linked. Binds one transferrin or HFE molecule per subunit. Interacts with SH3BP4. Interacts with STEAP3; facilitates TFRC endocytosis in erythroid precursor cells. Post-translationally, stearoylated by ZDHHC6 which inhibits TFRC-mediated activation of the JNK pathway and promotes mitochondrial fragmentation. Stearoylation does not affect iron uptake.

It is found in the cell membrane. The protein localises to the melanosome. Cellular uptake of iron occurs via receptor-mediated endocytosis of ligand-occupied transferrin receptor into specialized endosomes. Endosomal acidification leads to iron release. The apotransferrin-receptor complex is then recycled to the cell surface with a return to neutral pH and the concomitant loss of affinity of apotransferrin for its receptor. Transferrin receptor is necessary for development of erythrocytes and the nervous system. Positively regulates T and B cell proliferation through iron uptake. Acts as a lipid sensor that regulates mitochondrial fusion by regulating activation of the JNK pathway. When dietary levels of stearate (C18:0) are low, promotes activation of the JNK pathway, resulting in HUWE1-mediated ubiquitination and subsequent degradation of the mitofusin MFN2 and inhibition of mitochondrial fusion. When dietary levels of stearate (C18:0) are high, TFRC stearoylation inhibits activation of the JNK pathway and thus degradation of the mitofusin MFN2. Mediates uptake of NICOL1 into fibroblasts where it may regulate extracellular matrix production. This chain is Transferrin receptor protein 1 (TFRC), found in Equus caballus (Horse).